A 354-amino-acid polypeptide reads, in one-letter code: FAD synthetase 1, chloroplastic (354 aa).

Residues Met-1–Ser-75 constitute a chloroplast transit peptide. The tract at residues Ser-228–Arg-248 is disordered.

Mg(2+) serves as cofactor.

The protein resides in the plastid. It localises to the chloroplast. The enzyme catalyses FMN + ATP + H(+) = FAD + diphosphate. It participates in cofactor biosynthesis; FAD biosynthesis; FAD from FMN: step 1/1. In terms of biological role, catalyzes the adenylation of flavin mononucleotide (FMN) to form flavin adenine dinucleotide (FAD) coenzyme. The polypeptide is FAD synthetase 1, chloroplastic (Arabidopsis thaliana (Mouse-ear cress)).